The sequence spans 55 residues: ATP synthase F(0) complex subunit 8 (55 aa).

Residues 8-24 (PWFMIMLMTWFTYSLLI) form a helical membrane-spanning segment.

This sequence belongs to the ATPase protein 8 family. As to quaternary structure, component of the ATP synthase complex composed at least of ATP5F1A/subunit alpha, ATP5F1B/subunit beta, ATP5MC1/subunit c (homooctomer), MT-ATP6/subunit a, MT-ATP8/subunit 8, ATP5ME/subunit e, ATP5MF/subunit f, ATP5MG/subunit g, ATP5MK/subunit k, ATP5MJ/subunit j, ATP5F1C/subunit gamma, ATP5F1D/subunit delta, ATP5F1E/subunit epsilon, ATP5PF/subunit F6, ATP5PB/subunit b, ATP5PD/subunit d, ATP5PO/subunit OSCP. ATP synthase complex consists of a soluble F(1) head domain (subunits alpha(3) and beta(3)) - the catalytic core - and a membrane F(0) domain - the membrane proton channel (subunits c, a, 8, e, f, g, k and j). These two domains are linked by a central stalk (subunits gamma, delta, and epsilon) rotating inside the F1 region and a stationary peripheral stalk (subunits F6, b, d, and OSCP).

The protein localises to the mitochondrion membrane. Functionally, subunit 8, of the mitochondrial membrane ATP synthase complex (F(1)F(0) ATP synthase or Complex V) that produces ATP from ADP in the presence of a proton gradient across the membrane which is generated by electron transport complexes of the respiratory chain. ATP synthase complex consist of a soluble F(1) head domain - the catalytic core - and a membrane F(1) domain - the membrane proton channel. These two domains are linked by a central stalk rotating inside the F(1) region and a stationary peripheral stalk. During catalysis, ATP synthesis in the catalytic domain of F(1) is coupled via a rotary mechanism of the central stalk subunits to proton translocation. In vivo, can only synthesize ATP although its ATP hydrolase activity can be activated artificially in vitro. Part of the complex F(0) domain. This Coturnix japonica (Japanese quail) protein is ATP synthase F(0) complex subunit 8.